The primary structure comprises 202 residues: uncharacterized protein (202 aa).

A helical transmembrane segment spans residues 10-30; sequence TAAIFLLCCTSVIILFTIAVV.

The protein belongs to the bacterial sugar transferase family.

The protein localises to the cell membrane. May be involved in the production of the exopolysaccharide (EPS) component of the extracellular matrix during biofilm formation. EPS is responsible for the adhesion of chains of cells into bundles. This is an uncharacterized protein from Bacillus subtilis (strain 168).